The sequence spans 765 residues: Putative maltooligosyl trehalose synthase (765 aa).

This sequence belongs to the glycosyl hydrolase 13 family. As to quaternary structure, monomer.

The catalysed reaction is 4-[(1-&gt;4)-alpha-D-glucosyl](n-1)-D-glucose = 1-[(1-&gt;4)-alpha-D-glucosyl](n-1)-alpha-D-glucose. Functionally, catalyzes the conversion of maltooligosaccharide into the non-reducing saccharide, maltooligosyl trehalose (alpha-maltooligosyl alpha-D-glucoside) by intramolecular transglycosylation. This Mycobacterium tuberculosis (strain CDC 1551 / Oshkosh) protein is Putative maltooligosyl trehalose synthase (treY).